The chain runs to 380 residues: MTNPYNWIEKSLETLHKANWYRSVKTIHSRSGSVVNLKGNLVINFASNDYLGLAGDERLINASIDAIKQYGTGSTGSRLLSGHRPIHRELENAIASFKQTEDAIVFSSGYLANLGTITALVGQRDLILGDEYNHSSLKNGSKLSGATVLDYEHGNLEDLNTKLVNYRRSYRRCLILTDTVFSMDGDICPLPQLLDLAEDFNCMVLVDEAHATGVMGKTGAGCVEHLNCSGRELIQMGTLSKALGSLGGYVAGSFQLVEFLRNRAATWIYTTGLSPGDTAAALTALNIIQAEPQRRQQLWENVGLLKEQLSGFNLFPSETPIICLGLNTPTEALILAQKLQDGGIFAPAIRPPTVPTSRIRFTLMATHQPCHFQRLGAVIR.

R22 contributes to the substrate binding site. 109–110 (GY) is a binding site for pyridoxal 5'-phosphate. H134 contributes to the substrate binding site. Residues S182, 207–210 (DEAH), and 238–241 (TLSK) each bind pyridoxal 5'-phosphate. Residue K241 is modified to N6-(pyridoxal phosphate)lysine. Residue T353 coordinates substrate.

It belongs to the class-II pyridoxal-phosphate-dependent aminotransferase family. BioF subfamily. Homodimer. The cofactor is pyridoxal 5'-phosphate.

It catalyses the reaction 6-carboxyhexanoyl-[ACP] + L-alanine + H(+) = (8S)-8-amino-7-oxononanoate + holo-[ACP] + CO2. Its pathway is cofactor biosynthesis; biotin biosynthesis. Catalyzes the decarboxylative condensation of pimeloyl-[acyl-carrier protein] and L-alanine to produce 8-amino-7-oxononanoate (AON), [acyl-carrier protein], and carbon dioxide. The sequence is that of Putative 8-amino-7-oxononanoate synthase (bioF) from Gloeothece citriformis (strain PCC 7424) (Cyanothece sp. (strain PCC 7424)).